Reading from the N-terminus, the 128-residue chain is Ribonuclease P protein component (128 aa).

This sequence belongs to the RnpA family. As to quaternary structure, consists of a catalytic RNA component (M1 or rnpB) and a protein subunit.

It catalyses the reaction Endonucleolytic cleavage of RNA, removing 5'-extranucleotides from tRNA precursor.. Functionally, RNaseP catalyzes the removal of the 5'-leader sequence from pre-tRNA to produce the mature 5'-terminus. It can also cleave other RNA substrates such as 4.5S RNA. The protein component plays an auxiliary but essential role in vivo by binding to the 5'-leader sequence and broadening the substrate specificity of the ribozyme. This is Ribonuclease P protein component from Prochlorococcus marinus (strain AS9601).